Reading from the N-terminus, the 115-residue chain is Probable 4-amino-4-deoxy-L-arabinose-phosphoundecaprenol flippase subunit ArnE (115 aa).

The next 3 membrane-spanning stretches (helical) occupy residues 42–62 (PWPWLALLALGLGLLCWLLLL), 65–85 (VEVGSAYPMLALNFVLVTLAA), and 93–112 (VDRRHLAGLLLIVAGVALLG). In terms of domain architecture, EamA spans 46–113 (LALLALGLGL…IVAGVALLGR (68 aa)).

Belongs to the ArnE family. In terms of assembly, heterodimer of ArnE and ArnF.

The protein resides in the cell inner membrane. It participates in bacterial outer membrane biogenesis; lipopolysaccharide biosynthesis. Its function is as follows. Translocates 4-amino-4-deoxy-L-arabinose-phosphoundecaprenol (alpha-L-Ara4N-phosphoundecaprenol) from the cytoplasmic to the periplasmic side of the inner membrane. The chain is Probable 4-amino-4-deoxy-L-arabinose-phosphoundecaprenol flippase subunit ArnE from Pseudomonas aeruginosa (strain LESB58).